A 402-amino-acid chain; its full sequence is Oxysterol-binding protein 12 (402 aa).

A disordered region spans residues 333-366 (NNNNDKETAEEKAKIEEKQRKEESERREKGILWE). Basic and acidic residues predominate over residues 336–366 (NDKETAEEKAKIEEKQRKEESERREKGILWE).

Belongs to the OSBP family.

This Dictyostelium discoideum (Social amoeba) protein is Oxysterol-binding protein 12 (osbL).